Here is a 376-residue protein sequence, read N- to C-terminus: Glutamate 5-kinase (376 aa).

An ATP-binding site is contributed by Lys15. Ser55, Asp141, and Asn153 together coordinate substrate. Residues 173 to 174 (SD) and 215 to 221 (TGGMQTK) contribute to the ATP site. Residues 280-361 (AGRLTVDAGA…HAIAEVLDEA (82 aa)) enclose the PUA domain.

Belongs to the glutamate 5-kinase family.

It is found in the cytoplasm. The catalysed reaction is L-glutamate + ATP = L-glutamyl 5-phosphate + ADP. Its pathway is amino-acid biosynthesis; L-proline biosynthesis; L-glutamate 5-semialdehyde from L-glutamate: step 1/2. Functionally, catalyzes the transfer of a phosphate group to glutamate to form L-glutamate 5-phosphate. In Salinibacter ruber (strain DSM 13855 / M31), this protein is Glutamate 5-kinase.